The primary structure comprises 412 residues: Exodeoxyribonuclease 7 large subunit (412 aa).

Belongs to the XseA family. As to quaternary structure, heterooligomer composed of large and small subunits.

The protein localises to the cytoplasm. It catalyses the reaction Exonucleolytic cleavage in either 5'- to 3'- or 3'- to 5'-direction to yield nucleoside 5'-phosphates.. Its function is as follows. Bidirectionally degrades single-stranded DNA into large acid-insoluble oligonucleotides, which are then degraded further into small acid-soluble oligonucleotides. This Nostoc sp. (strain PCC 7120 / SAG 25.82 / UTEX 2576) protein is Exodeoxyribonuclease 7 large subunit.